Here is a 156-residue protein sequence, read N- to C-terminus: ATP synthase subunit b (156 aa).

Residues A13–I33 form a helical membrane-spanning segment.

This sequence belongs to the ATPase B chain family. As to quaternary structure, F-type ATPases have 2 components, F(1) - the catalytic core - and F(0) - the membrane proton channel. F(1) has five subunits: alpha(3), beta(3), gamma(1), delta(1), epsilon(1). F(0) has three main subunits: a(1), b(2) and c(10-14). The alpha and beta chains form an alternating ring which encloses part of the gamma chain. F(1) is attached to F(0) by a central stalk formed by the gamma and epsilon chains, while a peripheral stalk is formed by the delta and b chains.

It localises to the cell inner membrane. In terms of biological role, f(1)F(0) ATP synthase produces ATP from ADP in the presence of a proton or sodium gradient. F-type ATPases consist of two structural domains, F(1) containing the extramembraneous catalytic core and F(0) containing the membrane proton channel, linked together by a central stalk and a peripheral stalk. During catalysis, ATP synthesis in the catalytic domain of F(1) is coupled via a rotary mechanism of the central stalk subunits to proton translocation. Functionally, component of the F(0) channel, it forms part of the peripheral stalk, linking F(1) to F(0). This is ATP synthase subunit b from Aeromonas salmonicida (strain A449).